Consider the following 475-residue polypeptide: Gelsolin-like protein 1 (475 aa).

Residues Met-1–Lys-131 form an actin binding, actin severing, Ca-sensitive region. The tract at residues Met-1–Asp-239 is necessary for barbed end capping activity. The stretch at Phe-27–Leu-105 is one Gelsolin-like 1 repeat. Residues Asp-70–Gly-73 form an actin-actin interfilament contact point region. Residues Ser-106–Arg-147 are required for synapse elimination during development. The interval Trp-133–Val-227 is required for phosphatidylinositol 4,5-bisphosphate binding and regulation. 3 Gelsolin-like repeats span residues Cys-148–Ile-208, Arg-275–Phe-341, and Glu-375–Phe-447. Positions Asp-240 to His-475 are F- and G-actin binding, Ca-independent. Positions Thr-248–Trp-348 are inhibitory for phosphatidylinositol 4,5-bisphosphate binding activity.

It belongs to the villin/gelsolin family. Monomer. Binds to actin monomers and filaments. Post-translationally, cleavage by caspase ced-3 activates its actin-severing function and is required for the elimination of presynaptic components during development.

It is found in the cytoplasm. It localises to the cytoskeleton. In terms of biological role, calcium-regulated, actin-modulating protein that binds to the plus (or barbed) ends of actin monomers or filaments, preventing monomer exchange (end-blocking or capping). Binds actin but does not nucleate actin polymerization, albeit slows down elongation by blocking the barbed ends. By promoting actin depolymerization, required for the elimination of presynaptic components downstream of the egl-1, ced-4 and ced-3 apoptotic pathway during larval development. In Caenorhabditis elegans, this protein is Gelsolin-like protein 1.